Consider the following 1194-residue polypeptide: UPF0507 protein PICST_55861 (1194 aa).

The VPS9 domain occupies 324–475 (QSYDPEAVKF…LSSSLSDELS (152 aa)).

The protein belongs to the UPF0507 family.

In Scheffersomyces stipitis (strain ATCC 58785 / CBS 6054 / NBRC 10063 / NRRL Y-11545) (Yeast), this protein is UPF0507 protein PICST_55861.